We begin with the raw amino-acid sequence, 140 residues long: Histone H2B (140 aa).

A compositionally biased stretch (basic and acidic residues) spans 1-10 (MPPKAAEKKP). Residues 1–48 (MPPKAAEKKPTTGGKAPAGKAPAEKKEAGKKTAAAASGDKKKRGKTRK) are disordered. 2 positions are modified to N6-acetyllysine; alternate: K8 and K9. Residues K8 and K9 each participate in a glycyl lysine isopeptide (Lys-Gly) (interchain with G-Cter in SUMO); alternate cross-link. Over residues 11 to 21 (TTGGKAPAGKA) the composition is skewed to low complexity. Residue K15 is modified to N6-acetyllysine. Position 25 is an N6-acetyllysine; alternate (K25). A Glycyl lysine isopeptide (Lys-Gly) (interchain with G-Cter in SUMO); alternate cross-link involves residue K25. K26 participates in a covalent cross-link: Glycyl lysine isopeptide (Lys-Gly) (interchain with G-Cter in SUMO). K134 is covalently cross-linked (Glycyl lysine isopeptide (Lys-Gly) (interchain with G-Cter in ubiquitin)).

This sequence belongs to the histone H2B family. As to quaternary structure, the nucleosome is a histone octamer containing two molecules each of H2A, H2B, H3 and H4 assembled in one H3-H4 heterotetramer and two H2A-H2B heterodimers. The octamer wraps approximately 147 bp of DNA. Post-translationally, monoubiquitinated by the ubc2-bre1 complex to form H2BK123ub1. H2BK123ub1 gives a specific tag for epigenetic transcriptional activation and is also prerequisite for H3K4me and H3K79me formation. H2BK123ub1 also modulates the formation of double-strand breaks during meiosis and is a prerequisite for DNA-damage checkpoint activation. Acetylated by gcn5 to form H2BK11ac and H2BK16ac. H2BK16ac can also be formed by esa1. Acetylation of N-terminal lysines and particularly formation of H2BK11acK16ac has a positive effect on transcription. In terms of processing, sumoylation to form H2BK6su or H2BK7su, and probably also H2BK16su or H2BK17su, occurs preferentially near the telomeres and represses gene transcription.

Its subcellular location is the nucleus. It is found in the chromosome. Core component of nucleosome. Nucleosomes wrap and compact DNA into chromatin, limiting DNA accessibility to the cellular machineries which require DNA as a template. Histones thereby play a central role in transcription regulation, DNA repair, DNA replication and chromosomal stability. DNA accessibility is regulated via a complex set of post-translational modifications of histones, also called histone code, and nucleosome remodeling. This is Histone H2B (htb1) from Aspergillus terreus (strain NIH 2624 / FGSC A1156).